A 380-amino-acid chain; its full sequence is Flap endonuclease 1-A (380 aa).

The interval 1 to 105 (MGIKGLTKLL…QELAKRYSKR (105 aa)) is N-domain. D34 serves as a coordination point for Mg(2+). R71 is a binding site for DNA. Mg(2+) contacts are provided by D87, E159, E161, D180, and D182. An I-domain region spans residues 123 to 254 (AIEKFSKRTV…QTALKLIRQH (132 aa)). A DNA-binding site is contributed by E159. G232 and D234 together coordinate DNA. D234 contributes to the Mg(2+) binding site. The tract at residues 336-344 (SQGRLESFF) is interaction with PCNA. Positions 351 to 380 (SVPLKRKDTSEKPTKAVANKKTKGAGGKKK) are disordered. Residues 355–364 (KRKDTSEKPT) show a composition bias toward basic and acidic residues. Basic residues predominate over residues 368–380 (ANKKTKGAGGKKK).

It belongs to the XPG/RAD2 endonuclease family. FEN1 subfamily. As to quaternary structure, interacts with PCNA. Three molecules of FEN1 bind to one PCNA trimer with each molecule binding to one PCNA monomer. PCNA stimulates the nuclease activity without altering cleavage specificity. Mg(2+) serves as cofactor. In terms of processing, phosphorylated. Phosphorylation upon DNA damage induces relocalization to the nuclear plasma. As to expression, strongly expressed in proliferating tissues: root and shoot apical meristem, tiller bud, leaf, ligule primordia, marginal meristem of young leaves and panicles. Not expressed in mature leaves when exposed to UV.

It localises to the nucleus. It is found in the nucleolus. The protein localises to the nucleoplasm. Its subcellular location is the mitochondrion. Its activity is regulated as follows. Inhibited by NaCl. In terms of biological role, structure-specific nuclease with 5'-flap endonuclease and 5'-3' exonuclease activities involved in DNA replication and repair. During DNA replication, cleaves the 5'-overhanging flap structure that is generated by displacement synthesis when DNA polymerase encounters the 5'-end of a downstream Okazaki fragment. It enters the flap from the 5'-end and then tracks to cleave the flap base, leaving a nick for ligation. Also involved in the long patch base excision repair (LP-BER) pathway, by cleaving within the apurinic/apyrimidinic (AP) site-terminated flap. Acts as a genome stabilization factor that prevents flaps from equilibrating into structures that lead to duplications and deletions. Also possesses 5'-3' exonuclease activity on nicked or gapped double-stranded DNA, and exhibits RNase H activity. Also involved in replication and repair of rDNA and in repairing mitochondrial DNA. May be required for cell proliferation. The protein is Flap endonuclease 1-A of Oryza sativa subsp. japonica (Rice).